A 231-amino-acid polypeptide reads, in one-letter code: GFP-like fluorescent chromoprotein FP538 (231 aa).

The residue at position 65 (Phe65) is a Phenylalanine amide; atypical. A cross-link (2-tetrahydro-2-pyridyl-5-imidazolinone (Lys-Gly)) is located at residues 66–68 (KYG). Tyr67 is modified (2,3-didehydrotyrosine).

It belongs to the GFP family. As to quaternary structure, homotetramer. Post-translationally, contains a chromophore consisting of modified amino acid residues. The chromophore is formed by autocatalytic backbone condensation between Xaa-N and Gly-(N+2), and oxidation of Tyr-(N+1) to didehydrotyrosine. In addition, the residue N lysine undergoes cyclization. The alpha-amino nitrogen is replaced by the epsilon-amino nitrogen, the peptide chain is broken, residue N-1 is released as an amide, and a double bond is formed between the alpha-carbon and the nitrogen so that a tetrahydropyridine ring results. Maturation of the chromophore requires nothing other than molecular oxygen. As to expression, tentacle and oral disk.

In terms of biological role, pigment protein that is yellow in color. The polypeptide is GFP-like fluorescent chromoprotein FP538 (Zoanthus sp. (Green polyp)).